A 224-amino-acid polypeptide reads, in one-letter code: UPF0758 protein PST_0473 (224 aa).

Residues 102 to 224 form the MPN domain; sequence ALESPQAVRD…PLSMAEYGWM (123 aa). Zn(2+)-binding residues include His-173, His-175, and Asp-186. Positions 173-186 match the JAMM motif motif; sequence HNHPSGVAEPSQAD.

This sequence belongs to the UPF0758 family.

This is UPF0758 protein PST_0473 from Stutzerimonas stutzeri (strain A1501) (Pseudomonas stutzeri).